A 25-amino-acid chain; its full sequence is Small ribosomal subunit protein eS32 (25 aa).

The disordered stretch occupies residues 1-25; sequence MGGVGKTKRMRRLKRKRRKMRQRSK.

This sequence belongs to the eukaryotic ribosomal protein eS32 family. Component of the small ribosomal subunit.

This Glycine max (Soybean) protein is Small ribosomal subunit protein eS32 (RPL41).